The primary structure comprises 309 residues: Homoserine kinase (309 aa).

91–101 (PIGSGLGSSAC) is an ATP binding site.

This sequence belongs to the GHMP kinase family. Homoserine kinase subfamily.

It localises to the cytoplasm. It carries out the reaction L-homoserine + ATP = O-phospho-L-homoserine + ADP + H(+). It functions in the pathway amino-acid biosynthesis; L-threonine biosynthesis; L-threonine from L-aspartate: step 4/5. In terms of biological role, catalyzes the ATP-dependent phosphorylation of L-homoserine to L-homoserine phosphate. The sequence is that of Homoserine kinase from Klebsiella pneumoniae subsp. pneumoniae (strain ATCC 700721 / MGH 78578).